The chain runs to 310 residues: Methionyl-tRNA formyltransferase (310 aa).

(6S)-5,6,7,8-tetrahydrofolate is bound at residue 109–112; that stretch reads SLLP.

It belongs to the Fmt family.

The catalysed reaction is L-methionyl-tRNA(fMet) + (6R)-10-formyltetrahydrofolate = N-formyl-L-methionyl-tRNA(fMet) + (6S)-5,6,7,8-tetrahydrofolate + H(+). In terms of biological role, attaches a formyl group to the free amino group of methionyl-tRNA(fMet). The formyl group appears to play a dual role in the initiator identity of N-formylmethionyl-tRNA by promoting its recognition by IF2 and preventing the misappropriation of this tRNA by the elongation apparatus. This is Methionyl-tRNA formyltransferase from Pseudomonas putida (strain ATCC 700007 / DSM 6899 / JCM 31910 / BCRC 17059 / LMG 24140 / F1).